Here is a 402-residue protein sequence, read N- to C-terminus: Arginine deiminase (402 aa).

Residue Cys-391 is the Amidino-cysteine intermediate of the active site.

Belongs to the arginine deiminase family.

The protein resides in the cytoplasm. It catalyses the reaction L-arginine + H2O = L-citrulline + NH4(+). It participates in amino-acid degradation; L-arginine degradation via ADI pathway; carbamoyl phosphate from L-arginine: step 1/2. This is Arginine deiminase from Mycobacterium marinum (strain ATCC BAA-535 / M).